A 301-amino-acid chain; its full sequence is Probable alpha-L-glutamate ligase 1 (301 aa).

Residues 104-287 (LQLLSRKNIG…VAEKIIQFIE (184 aa)) form the ATP-grasp domain. ATP is bound by residues Lys-141, 178 to 179 (EY), Asp-187, and 211 to 213 (RSN). Mg(2+) contacts are provided by Asp-248, Glu-260, and Asn-262. Residues Asp-248, Glu-260, and Asn-262 each contribute to the Mn(2+) site.

This sequence belongs to the RimK family. The cofactor is Mg(2+). Requires Mn(2+) as cofactor.

In Shewanella frigidimarina (strain NCIMB 400), this protein is Probable alpha-L-glutamate ligase 1.